Consider the following 101-residue polypeptide: Small ribosomal subunit protein bS18c (101 aa).

Belongs to the bacterial ribosomal protein bS18 family. Part of the 30S ribosomal subunit.

It localises to the plastid. The protein localises to the chloroplast. The polypeptide is Small ribosomal subunit protein bS18c (Oenothera biennis (German evening primrose)).